A 279-amino-acid polypeptide reads, in one-letter code: MTKQIIVTDSTSDLSKEYLEANNIHVIPLSLTIEGASYVDQVDITSEEFINHIENDEDVKTSQPAIGEFISAYEELGKDGSEIISIHLSSGLSGTYNTAYQASQMVDANVTVIDSKSISFSLGYQIQHLVELVKEGVSTSEIVKKLNHLRENIKLFVVIGQLNQLIKGGRISKTKGLIGNLMKIKPIGTLDDGRLELVHNARTQNSSIQYLKKEIAEFIGDHEIKSIGVAHANVIEYVDKLKKVFNEAFHVNNYDINVTTPVISAHTGQGAIGLVVLKK.

Residues 4–278 enclose the DegV domain; sequence QIIVTDSTSD…QGAIGLVVLK (275 aa). Thr-61 and Ser-93 together coordinate hexadecanoate.

In terms of biological role, may bind long-chain fatty acids, such as palmitate, and may play a role in lipid transport or fatty acid metabolism. In Staphylococcus aureus (strain N315), this protein is DegV domain-containing protein SA1258.